Consider the following 77-residue polypeptide: Large ribosomal subunit protein eL20 (77 aa).

It belongs to the eukaryotic ribosomal protein eL20 family. In terms of assembly, part of the 50S ribosomal subunit. Binds 23S rRNA.

The chain is Large ribosomal subunit protein eL20 from Pyrococcus furiosus (strain ATCC 43587 / DSM 3638 / JCM 8422 / Vc1).